Reading from the N-terminus, the 497-residue chain is uncharacterized protein (497 aa).

Residue Gly266–Ser273 participates in ATP binding.

Belongs to the AAA ATPase family. Highly divergent.

The protein localises to the plastid. It is found in the chloroplast. This is an uncharacterized protein from Trieres chinensis (Marine centric diatom).